A 666-amino-acid chain; its full sequence is Probable potassium transport system protein Kup (666 aa).

12 helical membrane-spanning segments follow: residues 16–36 (GFIIALGIVYGDIGTSPLYTM), 58–78 (ISLIIWTLTLITTIKYVLIAL), 100–120 (PWLIIPAMIGGATLLSDGALT), 141–161 (IYQNQTNVIITTLVILIVLFG), 165–185 (FGTGFIGKIFGPVMFIWFSFL), 221–241 (IFILGSIFLATTGAEALYSDL), 253–273 (WPFVKMCIVLSYCGQAAWILA), 294–314 (VYLVSLATLAAIIASQALISG), 343–363 (LYIPVINWILFAVTSCTVLAF), 373–393 (YGLAITITMLMTTILLKYYLI), 399–419 (PILAHLVMAFFALVEFIFFLA), and 424–444 (FMHGGYAVVILALAIVFVMFI).

It belongs to the HAK/KUP transporter (TC 2.A.72) family.

It localises to the cell membrane. The enzyme catalyses K(+)(in) + H(+)(in) = K(+)(out) + H(+)(out). In terms of biological role, transport of potassium into the cell. Likely operates as a K(+):H(+) symporter. The protein is Probable potassium transport system protein Kup of Streptococcus pyogenes serotype M49 (strain NZ131).